The chain runs to 1405 residues: DNA-directed RNA polymerase subunit beta' (1405 aa).

Cys-70, Cys-72, Cys-85, and Cys-88 together coordinate Zn(2+). The Mg(2+) site is built by Asp-460, Asp-462, and Asp-464. Residues Cys-814, Cys-888, Cys-895, and Cys-898 each coordinate Zn(2+).

The protein belongs to the RNA polymerase beta' chain family. As to quaternary structure, the RNAP catalytic core consists of 2 alpha, 1 beta, 1 beta' and 1 omega subunit. When a sigma factor is associated with the core the holoenzyme is formed, which can initiate transcription. The cofactor is Mg(2+). It depends on Zn(2+) as a cofactor.

It catalyses the reaction RNA(n) + a ribonucleoside 5'-triphosphate = RNA(n+1) + diphosphate. Its function is as follows. DNA-dependent RNA polymerase catalyzes the transcription of DNA into RNA using the four ribonucleoside triphosphates as substrates. In Shewanella oneidensis (strain ATCC 700550 / JCM 31522 / CIP 106686 / LMG 19005 / NCIMB 14063 / MR-1), this protein is DNA-directed RNA polymerase subunit beta'.